The sequence spans 1133 residues: MSPTQWDFPVELCCRPMAFVTLTGLDVVYNAVHRAVWDAFCANRRADRVPISFKVLPGDHEYPKCRPKRTSYEWYIPKGILKTGWMNKHLNLVPALVVVFYELDWDEPQWKEKQSECATRVEIVRQSLQGRNTKVAVVLIQKKTPLPPGEDVIASERAAALCNACELSGKSLFVLPHTDHLVGYIIRLENAFYEHAQTYYYTEIRRVKSHKEFLNKTTHQLLFVRHQFKIAFFSELKQDTQNALKNYRTAYNLVHELRAHETNILEIKTMAGFINYKICRLCFQHNTPLDAIAQFRKHIDLCKKKIGSAELAFEHAAWMSKQFQAFGDLFDEAIKLGLTAIQTQNPGFYYQQAAYYAQERKQLAKALCNHEASVTYPNPDPLETQAGVLDFYGQRSWRQGVLSFDLSDPEKEKVGILAIQLKERSVVHSEVIITLLSNAVAQFKKYKCPRMKSHLMVQMGEEYYYAKDYTKALKLLDYVMCDYRSEGWWTLLTSILTTALKCSYLMAQLKDYITYSLELLGRASTLKDDQKSRIEKNLINVLMNESPDPEPDCDILAVKTAQKLWVDRISLAGSNVFTIGVQDFVPFVQCKAKFHAPSFHVDVPVQFDVYLKADCPHPIRFSKLCISFNNQEYNQFCVIEEASKASDVLENLTQGKMCLVPGKTRKFLFKFVAKTEDVGKKIEITSVDLVLGSEAGRCVVLNWQGGGGDAASAQEALQASRSFKRRPRLPDSEVHWDGIVIQASTMIISRVPNISVHLRHDPPALTNEMYCLVVTVQSHEKSPIRDVKLTAGLKPGQDANLTQKTHVTLHGTELCDESYPALLTDIPIGDLQPGEQLEKAVYVRCGTVGSRMFLVYVSYLINTAIEGKETVCKCHKDETVTIETVFPFDVAVKFVSTKFEHLERVYADIPFLLMTDLLSASPWALTIVSSELQLAPSMTPVDQLESQVDRVVLQTGESASECFCLRCPSVGNVEGGVATGHYVISWKRTSATDGVPVISTVITLPHVIVENIPLHVNADLPSFGRVRESLPVRYHLQNKTDLVQDVEISVEPSDAFMFSGLKQIRLRILPGTEQEMLYNFYPLMAGYQQLPSLNINLLRFPNFTNQLLRRFIPTSIFVKPQGRLVDDASIAAA.

The residue at position 245 (K245) is an N6-acetyllysine.

Belongs to the TRAPPC11 family. In terms of assembly, component of the multisubunit TRAPP (transport protein particle) complex, which includes at least TRAPPC2, TRAPPC2L, TRAPPC3, TRAPPC3L, TRAPPC4, TRAPPC5, TRAPPC8, TRAPPC9, TRAPPC10, TRAPPC11 and TRAPPC12.

It is found in the golgi apparatus. The protein resides in the cis-Golgi network. In terms of biological role, involved in endoplasmic reticulum to Golgi apparatus trafficking at a very early stage. This Bos taurus (Bovine) protein is Trafficking protein particle complex subunit 11 (TRAPPC11).